The following is a 1097-amino-acid chain: DNA-directed RNA polymerase subunit beta (1097 aa).

The interval 1072–1097 is disordered; sequence QDVNPRRSTPSRPTYESLGVADYDED.

This sequence belongs to the RNA polymerase beta chain family. In terms of assembly, in cyanobacteria the RNAP catalytic core is composed of 2 alpha, 1 beta, 1 beta', 1 gamma and 1 omega subunit. When a sigma factor is associated with the core the holoenzyme is formed, which can initiate transcription.

It catalyses the reaction RNA(n) + a ribonucleoside 5'-triphosphate = RNA(n+1) + diphosphate. In terms of biological role, DNA-dependent RNA polymerase catalyzes the transcription of DNA into RNA using the four ribonucleoside triphosphates as substrates. The chain is DNA-directed RNA polymerase subunit beta from Synechococcus sp. (strain CC9902).